We begin with the raw amino-acid sequence, 227 residues long: Germin-like protein subfamily T member 3 (227 aa).

The N-terminal stretch at 1-26 is a signal peptide; the sequence is MAHISQISSFLSIVLIFLALCITLFT. A disulfide bridge links Cys-44 with Cys-59. The 149-residue stretch at 71–219 folds into the Cupin type-1 domain; the sequence is SGLNTPLNTS…AFKADSKTIN (149 aa). N-linked (GlcNAc...) asparagine glycosylation is present at Asn-78. Residues His-119, His-121, and Glu-126 each contribute to the Mn(2+) site. A glycan (N-linked (GlcNAc...) asparagine) is linked at Asn-143. His-165 contributes to the Mn(2+) binding site.

This sequence belongs to the germin family. In terms of assembly, oligomer (believed to be a pentamer but probably hexamer).

Its subcellular location is the secreted. It localises to the extracellular space. It is found in the apoplast. In terms of biological role, may play a role in plant defense. Probably has no oxalate oxidase activity even if the active site is conserved. This chain is Germin-like protein subfamily T member 3, found in Arabidopsis thaliana (Mouse-ear cress).